The primary structure comprises 131 residues: Small ribosomal subunit protein uS8c (131 aa).

Belongs to the universal ribosomal protein uS8 family. In terms of assembly, part of the 30S ribosomal subunit.

Its subcellular location is the plastid. The protein resides in the chloroplast. Its function is as follows. One of the primary rRNA binding proteins, it binds directly to 16S rRNA central domain where it helps coordinate assembly of the platform of the 30S subunit. The sequence is that of Small ribosomal subunit protein uS8c (rps8) from Phalaenopsis aphrodite subsp. formosana (Moth orchid).